An 89-amino-acid polypeptide reads, in one-letter code: OMEGA-ectatommitoxin(02)-Rm1a (89 aa).

The N-terminal stretch at methionine 1 to glycine 30 is a signal peptide. Disulfide bonds link cysteine 39–cysteine 52, cysteine 47–cysteine 68, and cysteine 70–cysteine 79. The EGF-like domain occupies tyrosine 43–glycine 80.

It belongs to the EGF domain peptide family. In terms of tissue distribution, expressed by the venom gland.

It is found in the secreted. Ant peptide with probable defensive activity which acts as a potent agonist of the mammalian epidermal growth factor receptor (EGFR). Mimics, both structurally and functionally, vertebrate epidermal growth factor (EGF) peptide hormones. In vivo, intraplantar injection in mice causes long-lasting (several days) hypersensitivity of the injected paw to both mechanical and thermal stimuli. Its long-lasting effect is unusual for venom toxins whose effects are usually immediate. One possible explanation is that it would reduce the duration of a nest attack, discourage future attacks, or enhance the actions of subsequent exposure to other pain-inducing venom peptides. This is OMEGA-ectatommitoxin(02)-Rm1a from Rhytidoponera metallica (Australian green-headed ant).